The following is a 121-amino-acid chain: Small ribosomal subunit protein uS13 (121 aa).

The disordered stretch occupies residues 91–121 (HRMSLPVRGQRTRTNARTRRGSRKTVAGRKK). The segment covering 100-121 (QRTRTNARTRRGSRKTVAGRKK) has biased composition (basic residues).

It belongs to the universal ribosomal protein uS13 family. Part of the 30S ribosomal subunit. Forms a loose heterodimer with protein S19. Forms two bridges to the 50S subunit in the 70S ribosome.

Located at the top of the head of the 30S subunit, it contacts several helices of the 16S rRNA. In the 70S ribosome it contacts the 23S rRNA (bridge B1a) and protein L5 of the 50S subunit (bridge B1b), connecting the 2 subunits; these bridges are implicated in subunit movement. Contacts the tRNAs in the A and P-sites. The protein is Small ribosomal subunit protein uS13 of Prochlorococcus marinus (strain AS9601).